The chain runs to 202 residues: dTTP/UTP pyrophosphatase (202 aa).

Catalysis depends on D80, which acts as the Proton acceptor.

The protein belongs to the Maf family. YhdE subfamily. The cofactor is a divalent metal cation.

It localises to the cytoplasm. The catalysed reaction is dTTP + H2O = dTMP + diphosphate + H(+). It catalyses the reaction UTP + H2O = UMP + diphosphate + H(+). Its function is as follows. Nucleoside triphosphate pyrophosphatase that hydrolyzes dTTP and UTP. May have a dual role in cell division arrest and in preventing the incorporation of modified nucleotides into cellular nucleic acids. The sequence is that of dTTP/UTP pyrophosphatase from Alkalilimnicola ehrlichii (strain ATCC BAA-1101 / DSM 17681 / MLHE-1).